Here is a 127-residue protein sequence, read N- to C-terminus: Small ribosomal subunit protein uS11 (127 aa).

This sequence belongs to the universal ribosomal protein uS11 family. Part of the 30S ribosomal subunit. Interacts with proteins S7 and S18. Binds to IF-3.

Located on the platform of the 30S subunit, it bridges several disparate RNA helices of the 16S rRNA. Forms part of the Shine-Dalgarno cleft in the 70S ribosome. In Anaeromyxobacter dehalogenans (strain 2CP-C), this protein is Small ribosomal subunit protein uS11.